Here is a 423-residue protein sequence, read N- to C-terminus: Glucoside xylosyltransferase 2 (423 aa).

The Cytoplasmic segment spans residues 1–6 (MRFRWK). Residues 7–26 (FFGSLLCVTGLLLVLYRQLG) form a helical; Signal-anchor for type II membrane protein membrane-spanning segment. Residues 27–423 (NVPQPPPGPA…RVVVHIRSDV (397 aa)) lie on the Lumenal side of the membrane. Residues 60–85 (RRDARQGGKKKTNWNNVRAPEQKPNP) form a disordered region. N-linked (GlcNAc...) asparagine glycans are attached at residues Asn-215 and Asn-256.

This sequence belongs to the glycosyltransferase 8 family.

It is found in the membrane. The catalysed reaction is 3-O-(beta-D-glucosyl)-L-seryl-[EGF-like domain protein] + UDP-alpha-D-xylose = 3-O-[alpha-D-xylosyl-(1-&gt;3)-beta-D-glucosyl]-L-seryl-[EGF-like domain protein] + UDP + H(+). Its function is as follows. Glycosyltransferase which elongates the O-linked glucose attached to EGF-like repeats in the extracellular domain of Notch proteins by catalyzing the addition of xylose. The polypeptide is Glucoside xylosyltransferase 2 (gxylt2) (Xenopus laevis (African clawed frog)).